Reading from the N-terminus, the 401-residue chain is 1-deoxy-D-xylulose 5-phosphate reductoisomerase (401 aa).

NADPH-binding residues include Thr10, Gly11, Ser12, Ile13, Gly36, Arg37, Asn38, and Asn124. Lys125 contributes to the 1-deoxy-D-xylulose 5-phosphate binding site. Residue Glu126 participates in NADPH binding. Asp150 is a Mn(2+) binding site. Positions 151, 152, 176, and 199 each coordinate 1-deoxy-D-xylulose 5-phosphate. Glu152 provides a ligand contact to Mn(2+). An NADPH-binding site is contributed by Gly205. Residues Ser212, Asn217, Lys218, and Glu221 each contribute to the 1-deoxy-D-xylulose 5-phosphate site. Glu221 contributes to the Mn(2+) binding site.

This sequence belongs to the DXR family. Mg(2+) serves as cofactor. The cofactor is Mn(2+).

The enzyme catalyses 2-C-methyl-D-erythritol 4-phosphate + NADP(+) = 1-deoxy-D-xylulose 5-phosphate + NADPH + H(+). It functions in the pathway isoprenoid biosynthesis; isopentenyl diphosphate biosynthesis via DXP pathway; isopentenyl diphosphate from 1-deoxy-D-xylulose 5-phosphate: step 1/6. Its function is as follows. Catalyzes the NADPH-dependent rearrangement and reduction of 1-deoxy-D-xylulose-5-phosphate (DXP) to 2-C-methyl-D-erythritol 4-phosphate (MEP). The chain is 1-deoxy-D-xylulose 5-phosphate reductoisomerase from Acaryochloris marina (strain MBIC 11017).